Consider the following 72-residue polypeptide: Translation initiation factor IF-1 (72 aa).

The region spanning 1–72 (MAKEEQIELE…TKGRITFRMK (72 aa)) is the S1-like domain.

The protein belongs to the IF-1 family. As to quaternary structure, component of the 30S ribosomal translation pre-initiation complex which assembles on the 30S ribosome in the order IF-2 and IF-3, IF-1 and N-formylmethionyl-tRNA(fMet); mRNA recruitment can occur at any time during PIC assembly.

The protein resides in the cytoplasm. One of the essential components for the initiation of protein synthesis. Stabilizes the binding of IF-2 and IF-3 on the 30S subunit to which N-formylmethionyl-tRNA(fMet) subsequently binds. Helps modulate mRNA selection, yielding the 30S pre-initiation complex (PIC). Upon addition of the 50S ribosomal subunit IF-1, IF-2 and IF-3 are released leaving the mature 70S translation initiation complex. This chain is Translation initiation factor IF-1, found in Alcanivorax borkumensis (strain ATCC 700651 / DSM 11573 / NCIMB 13689 / SK2).